The following is a 347-amino-acid chain: Spermidine/putrescine import ATP-binding protein PotA (347 aa).

Residues 6–236 enclose the ABC transporter domain; that stretch reads IEIKNVYKEF…PKNAFVAKFI (231 aa). 38–45 is a binding site for ATP; that stretch reads GPSGCGKT.

This sequence belongs to the ABC transporter superfamily. Spermidine/putrescine importer (TC 3.A.1.11.1) family. In terms of assembly, the complex is composed of two ATP-binding proteins (PotA), two transmembrane proteins (PotB and PotC) and a solute-binding protein (PotD).

The protein resides in the cell membrane. The catalysed reaction is ATP + H2O + polyamine-[polyamine-binding protein]Side 1 = ADP + phosphate + polyamineSide 2 + [polyamine-binding protein]Side 1.. Part of the ABC transporter complex PotABCD involved in spermidine/putrescine import. Responsible for energy coupling to the transport system. This Clostridium novyi (strain NT) protein is Spermidine/putrescine import ATP-binding protein PotA.